Consider the following 247-residue polypeptide: Probable dihydroorotate dehydrogenase B (NAD(+)), electron transfer subunit (247 aa).

Residues 1–87 (MLRRVSIEET…RGPYGHGFSG (87 aa)) enclose the FAD-binding FR-type domain. The [2Fe-2S] cluster site is built by cysteine 201, cysteine 206, cysteine 209, and cysteine 217.

Belongs to the PyrK family. In terms of assembly, heterotetramer of 2 PyrK and 2 PyrD type B subunits. Requires [2Fe-2S] cluster as cofactor. The cofactor is FAD.

It participates in pyrimidine metabolism; UMP biosynthesis via de novo pathway; orotate from (S)-dihydroorotate (NAD(+) route): step 1/1. Functionally, responsible for channeling the electrons from the oxidation of dihydroorotate from the FMN redox center in the PyrD type B subunit to the ultimate electron acceptor NAD(+). The protein is Probable dihydroorotate dehydrogenase B (NAD(+)), electron transfer subunit of Pyrococcus furiosus (strain ATCC 43587 / DSM 3638 / JCM 8422 / Vc1).